We begin with the raw amino-acid sequence, 160 residues long: SsrA-binding protein (160 aa).

This sequence belongs to the SmpB family.

It is found in the cytoplasm. In terms of biological role, required for rescue of stalled ribosomes mediated by trans-translation. Binds to transfer-messenger RNA (tmRNA), required for stable association of tmRNA with ribosomes. tmRNA and SmpB together mimic tRNA shape, replacing the anticodon stem-loop with SmpB. tmRNA is encoded by the ssrA gene; the 2 termini fold to resemble tRNA(Ala) and it encodes a 'tag peptide', a short internal open reading frame. During trans-translation Ala-aminoacylated tmRNA acts like a tRNA, entering the A-site of stalled ribosomes, displacing the stalled mRNA. The ribosome then switches to translate the ORF on the tmRNA; the nascent peptide is terminated with the 'tag peptide' encoded by the tmRNA and targeted for degradation. The ribosome is freed to recommence translation, which seems to be the essential function of trans-translation. This is SsrA-binding protein from Pectobacterium carotovorum subsp. carotovorum (strain PC1).